The primary structure comprises 638 residues: Asparagine--tRNA ligase, cytoplasmic 2 (638 aa).

The segment covering 1 to 16 (MESHGKTHQKEHDNDL) has biased composition (basic and acidic residues). 2 disordered regions span residues 1–23 (MESHGKTHQKEHDNDLSPKPITL) and 62–87 (VKKNSPPPPLPVVAAPSPSSGGDQAH).

This sequence belongs to the class-II aminoacyl-tRNA synthetase family.

It is found in the cytoplasm. It localises to the cytosol. It carries out the reaction tRNA(Asn) + L-asparagine + ATP = L-asparaginyl-tRNA(Asn) + AMP + diphosphate + H(+). This chain is Asparagine--tRNA ligase, cytoplasmic 2, found in Arabidopsis thaliana (Mouse-ear cress).